Consider the following 106-residue polypeptide: ATP-dependent Clp protease adapter protein ClpS (106 aa).

Belongs to the ClpS family. Binds to the N-terminal domain of the chaperone ClpA.

Functionally, involved in the modulation of the specificity of the ClpAP-mediated ATP-dependent protein degradation. This Edwardsiella ictaluri (strain 93-146) protein is ATP-dependent Clp protease adapter protein ClpS.